The following is a 161-amino-acid chain: Endoribonuclease YbeY (161 aa).

3 residues coordinate Zn(2+): H121, H125, and H131.

Belongs to the endoribonuclease YbeY family. The cofactor is Zn(2+).

The protein localises to the cytoplasm. Single strand-specific metallo-endoribonuclease involved in late-stage 70S ribosome quality control and in maturation of the 3' terminus of the 16S rRNA. The polypeptide is Endoribonuclease YbeY (Xanthomonas axonopodis pv. citri (strain 306)).